The primary structure comprises 147 residues: Thyrotropin subunit beta (147 aa).

Positions 1–20 (MRVVLLASAVLCLLAGQVLS) are cleaved as a signal peptide. Intrachain disulfides connect Cys-22-Cys-72, Cys-36-Cys-87, Cys-39-Cys-126, Cys-47-Cys-103, Cys-51-Cys-105, and Cys-108-Cys-115. An N-linked (GlcNAc...) asparagine glycan is attached at Asn-43.

Belongs to the glycoprotein hormones subunit beta family. In terms of assembly, heterodimer of a common alpha chain and a unique beta chain which confers biological specificity to thyrotropin, lutropin, follitropin and gonadotropin.

The protein resides in the secreted. Its function is as follows. Indispensable for the control of thyroid structure and metabolism. May play some role in the biological processes of the immature fishes. The sequence is that of Thyrotropin subunit beta (tshb) from Anguilla anguilla (European freshwater eel).